The chain runs to 417 residues: NADH-quinone oxidoreductase subunit D (417 aa).

It belongs to the complex I 49 kDa subunit family. NDH-1 is composed of 14 different subunits. Subunits NuoB, C, D, E, F, and G constitute the peripheral sector of the complex.

It localises to the cell inner membrane. It carries out the reaction a quinone + NADH + 5 H(+)(in) = a quinol + NAD(+) + 4 H(+)(out). Functionally, NDH-1 shuttles electrons from NADH, via FMN and iron-sulfur (Fe-S) centers, to quinones in the respiratory chain. The immediate electron acceptor for the enzyme in this species is believed to be ubiquinone. Couples the redox reaction to proton translocation (for every two electrons transferred, four hydrogen ions are translocated across the cytoplasmic membrane), and thus conserves the redox energy in a proton gradient. The polypeptide is NADH-quinone oxidoreductase subunit D (Francisella tularensis subsp. novicida (strain U112)).